Here is a 645-residue protein sequence, read N- to C-terminus: 1,4-alpha-glucan branching enzyme GlgB (645 aa).

Residue Asp-309 is the Nucleophile of the active site. The Proton donor role is filled by Glu-352. The disordered stretch occupies residues 619–645 (VKTRKGSKKQDGSKTKVRSNVTSRGKR). The span at 636–645 (RSNVTSRGKR) shows a compositional bias: polar residues.

It belongs to the glycosyl hydrolase 13 family. GlgB subfamily. Monomer.

The enzyme catalyses Transfers a segment of a (1-&gt;4)-alpha-D-glucan chain to a primary hydroxy group in a similar glucan chain.. The protein operates within glycan biosynthesis; glycogen biosynthesis. In terms of biological role, catalyzes the formation of the alpha-1,6-glucosidic linkages in glycogen by scission of a 1,4-alpha-linked oligosaccharide from growing alpha-1,4-glucan chains and the subsequent attachment of the oligosaccharide to the alpha-1,6 position. The sequence is that of 1,4-alpha-glucan branching enzyme GlgB from Bacillus cereus (strain ATCC 10987 / NRS 248).